The chain runs to 435 residues: Nucleosome assembly protein 1 (435 aa).

The tract at residues 1–51 (MTEQPINTKKKNGDISKAPTPQNTPASVTNSYMRSKPPTVSTIQESNNEDG) is disordered. At Ser-16 the chain carries Phosphoserine. Residues 19–50 (PTPQNTPASVTNSYMRSKPPTVSTIQESNNED) show a composition bias toward polar residues. Phosphothreonine is present on residues Thr-20 and Thr-24. A Phosphoserine modification is found at Ser-27. Thr-29 is subject to Phosphothreonine. Phosphoserine occurs at positions 31 and 35. Phosphothreonine is present on Thr-42. The residue at position 46 (Ser-46) is a Phosphoserine. Thr-52 is modified (phosphothreonine). Composition is skewed to acidic residues over residues 146-185 (PTVEEIEEGQQLEEEEKGIDKEDGEEEEEEEEDDEEEDEQ) and 338-355 (EANDDDEGEEGDEEDEEL). Disordered stretches follow at residues 146-187 (PTVE…EQGI) and 308-435 (ESFF…CKQQ). Positions 356 to 374 (EARLELDYQLGEEIKDRLI) are enriched in basic and acidic residues. A compositionally biased stretch (acidic residues) spans 386–421 (VDFDYPELEGEGDEDEYSDEDGEGDSDDDDDDDDEA).

Belongs to the nucleosome assembly protein (NAP) family. As to quaternary structure, component of the GIN4 complex which forms a ring at the bud neck. Phosphorylation is cell cycle dependent and is important for its bud neck localization. Phosphorylation is highest in newly collected G1 cells, declines when the cells are traversing through the G1 phase, and reaches the lowest level around the time of bud emergence. Phosphorylation increases and remains high through the rest of the cell cycle until the beginning of the next one, when it decreases again. Phosphorylation involves two septin ring-associated kinases, CLA4 and GIN4, and its dephosphorylation occurs at the septin ring in a manner dependent on the phosphatases PP2A and CDC14.

Its subcellular location is the bud neck. It is found in the bud tip. Its function is as follows. Acidic protein, which assembles histones into an octamer. Involved in the regulation of the localization and the function of the septins during mitosis. In Candida albicans (strain SC5314 / ATCC MYA-2876) (Yeast), this protein is Nucleosome assembly protein 1 (NAP1).